Reading from the N-terminus, the 243-residue chain is Ribosomal RNA small subunit methyltransferase G (243 aa).

S-adenosyl-L-methionine-binding positions include Gly80, Phe85, 132 to 133 (IE), and Arg151.

This sequence belongs to the methyltransferase superfamily. RNA methyltransferase RsmG family.

The protein resides in the cytoplasm. Functionally, specifically methylates the N7 position of a guanine in 16S rRNA. This is Ribosomal RNA small subunit methyltransferase G from Synechococcus sp. (strain CC9902).